The following is a 280-amino-acid chain: 4-hydroxy-3-methylbut-2-enyl diphosphate reductase (280 aa).

[4Fe-4S] cluster is bound at residue Cys-12. (2E)-4-hydroxy-3-methylbut-2-enyl diphosphate contacts are provided by His-40 and His-72. His-40 and His-72 together coordinate dimethylallyl diphosphate. Isopentenyl diphosphate-binding residues include His-40 and His-72. Cys-94 serves as a coordination point for [4Fe-4S] cluster. His-122 lines the (2E)-4-hydroxy-3-methylbut-2-enyl diphosphate pocket. His-122 is a binding site for dimethylallyl diphosphate. His-122 is a binding site for isopentenyl diphosphate. Catalysis depends on Glu-124, which acts as the Proton donor. Thr-160 contacts (2E)-4-hydroxy-3-methylbut-2-enyl diphosphate. Cys-188 is a [4Fe-4S] cluster binding site. (2E)-4-hydroxy-3-methylbut-2-enyl diphosphate is bound by residues Ser-216, Asn-218, and Ser-260. Dimethylallyl diphosphate-binding residues include Ser-216, Asn-218, and Ser-260. Isopentenyl diphosphate-binding residues include Ser-216, Asn-218, and Ser-260.

This sequence belongs to the IspH family. [4Fe-4S] cluster serves as cofactor.

It carries out the reaction isopentenyl diphosphate + 2 oxidized [2Fe-2S]-[ferredoxin] + H2O = (2E)-4-hydroxy-3-methylbut-2-enyl diphosphate + 2 reduced [2Fe-2S]-[ferredoxin] + 2 H(+). The enzyme catalyses dimethylallyl diphosphate + 2 oxidized [2Fe-2S]-[ferredoxin] + H2O = (2E)-4-hydroxy-3-methylbut-2-enyl diphosphate + 2 reduced [2Fe-2S]-[ferredoxin] + 2 H(+). The protein operates within isoprenoid biosynthesis; dimethylallyl diphosphate biosynthesis; dimethylallyl diphosphate from (2E)-4-hydroxy-3-methylbutenyl diphosphate: step 1/1. It participates in isoprenoid biosynthesis; isopentenyl diphosphate biosynthesis via DXP pathway; isopentenyl diphosphate from 1-deoxy-D-xylulose 5-phosphate: step 6/6. Catalyzes the conversion of 1-hydroxy-2-methyl-2-(E)-butenyl 4-diphosphate (HMBPP) into a mixture of isopentenyl diphosphate (IPP) and dimethylallyl diphosphate (DMAPP). Acts in the terminal step of the DOXP/MEP pathway for isoprenoid precursor biosynthesis. In Trichlorobacter lovleyi (strain ATCC BAA-1151 / DSM 17278 / SZ) (Geobacter lovleyi), this protein is 4-hydroxy-3-methylbut-2-enyl diphosphate reductase.